We begin with the raw amino-acid sequence, 329 residues long: Protein RecA (329 aa).

Gly63–Thr70 contacts ATP.

Belongs to the RecA family.

Its subcellular location is the cytoplasm. Functionally, can catalyze the hydrolysis of ATP in the presence of single-stranded DNA, the ATP-dependent uptake of single-stranded DNA by duplex DNA, and the ATP-dependent hybridization of homologous single-stranded DNAs. It interacts with LexA causing its activation and leading to its autocatalytic cleavage. The chain is Protein RecA from Malacoplasma penetrans (strain HF-2) (Mycoplasma penetrans).